Reading from the N-terminus, the 495-residue chain is Cytochrome P450 monooxygenase 113 (495 aa).

Residues 2–22 (FLQIAACFTVIGLLYGLVSNL) traverse the membrane as a helical segment. Cys428 contributes to the heme binding site.

This sequence belongs to the cytochrome P450 family. Requires heme as cofactor.

The protein localises to the membrane. The protein operates within secondary metabolite biosynthesis. In terms of biological role, cytochrome P450 monooxygenase that is able to use 4-ethoxybenzoic acid as a substrate for oxidation. The chain is Cytochrome P450 monooxygenase 113 from Postia placenta (strain ATCC 44394 / Madison 698-R) (Brown rot fungus).